The sequence spans 250 residues: UPF0309 protein BH0227 (250 aa).

The SIS domain maps to 31–214 (VAESIQNGGI…KRMADNGYEP (184 aa)).

This sequence belongs to the UPF0309 family.

The polypeptide is UPF0309 protein BH0227 (Halalkalibacterium halodurans (strain ATCC BAA-125 / DSM 18197 / FERM 7344 / JCM 9153 / C-125) (Bacillus halodurans)).